Reading from the N-terminus, the 289-residue chain is Ketose 3-epimerase (289 aa).

Catalysis depends on glutamate 146, which acts as the Proton donor/acceptor. Residue glutamate 146 coordinates Mn(2+). Residues glutamate 152 and 179 to 182 (DTYH) each bind substrate. The Mn(2+) site is built by aspartate 179 and histidine 205. Arginine 211 is a substrate binding site. Catalysis depends on glutamate 240, which acts as the Proton donor/acceptor. Glutamate 240 lines the Mn(2+) pocket.

Belongs to the hyi family. As to quaternary structure, homotetramer. It depends on Mg(2+) as a cofactor. The cofactor is Mn(2+). Co(2+) is required as a cofactor.

It carries out the reaction L-ribulose = L-xylulose. The enzyme catalyses D-allulose = keto-D-fructose. The catalysed reaction is keto-L-tagatose = keto-L-sorbose. It catalyses the reaction D-ribulose = D-xylulose. It carries out the reaction L-allulose = keto-L-fructose. The enzyme catalyses keto-D-tagatose = keto-D-sorbose. In terms of biological role, catalyzes the reversible C-3 epimerization of several ketoses. Shows the highest enzymatic activity for the epimerization of L-ribulose to L-xylulose. Is also able to convert D-allulose (also known as D-psicose) to D-fructose and, to a lesser extent, L-tagatose to L-sorbose, D-ribulose to D-xylulose, L-allulose to L-fructose and D-tagatose to D-sorbose. This chain is Ketose 3-epimerase, found in Arthrobacter globiformis.